A 1370-amino-acid polypeptide reads, in one-letter code: MAYSIANNPLLRKNFAKIKKIIDIPNLIDIQKNSYKRFLQLDVPAEARKYSGLEAVFKSVFPIKDFSETASLEYVSYSLGIPKYDVEECHQRGMTFAAPMKVKVRLVVWDVNKEPSTRSIRDIKEQEVYFGEIPLMTENGTFIINGTERVIVSQLHRSPGVFYDHDKGKTHSSGKVLYSARVIPYRGSWLDFEFDHKDILYVRIDRRRKMPATVLLKALGYSTDELLNFFYKSEEINFAGEKLTKVADPELLTNQKAAIDIVDSATGEVLVKANRKFTKAAIRKMAEHGIKFIPITIEELVGKISSHDIVDPSTGEIVAECNEELTQAKLEEIKSKGINTFKVLFIDNLHVTSSFRDTIIIDKIGSTDDALIEIYRRLRPGDPPTLKSALSLFENLFFNPERYDLSAVGRLKLNYKLGLQVPLDCMTLTREDVLEVVRYLIDLKNGRGNIDDIDHLGNRRVRAVGELLENQYRIGLVRMERAIKERMSLQEVENLMPHDLINSKPVSAVVKEFFGSSQLSQFMDQTNPLSEVTHKRRLSALGPGGLTRERAGFEVRDVHPTHYGRVCPIETPEGPNIGLIASLSTYARINEHGFVETPYRLVQEGKVTNEVRFFSALEEEGHAIAQANAEVDKDGRFVADYISARKSGEFVLVGRDELELMDVAPMQLVSVAASLIPFLENDDANRALMGSNMQRQAVPLLRADSPLVGTGMERVVARDSGVSVVARHNGVVESVDASRIVVKIDEDEYDETGTGVDIYNLIKFARSNQNTCINQRPVVKIGDHVKRGDVIADGPSTDMGELALGQNVLVAFMPWGGYNFEDSILISERLVKDDRYTSIHIEEFECVARDTKLGKEEITADIPNLGEETLKDLDESGIIRIGAEVRPGDILIGKITPKGETQLSPEEKLLRAIFGEKAGDVRDTSLRVPPGVEGTVIGAKIFSRKGADKDARTELIEQAEEKKLRKDEQDEIRIIRESAVSKLKKLLVGKTAAVKVEGKDGKILIVKGKAISEEALSSIPIDRWDEISVADDESTDDKVAQILSTLNQQIDIIKYVFDDKVQKLKRGDDLPPGVIKMVKVYIAIKRKLQVGDKMAGRHGNKGVVSRILPEEDMPYLEDGRPVEIVLNPLGVPSRMNVGQILETHLGWAAKGIGWQIEEMLEKNSEKTKIKTYLKEVYGNKEMNKFLDTLDDEELSNVAKRLKRGVPMASPVFEGSSEEGIREMLGKAGFAHTAQVTLYDGKSGDAFKHKVTVGVMYVLKLHHLVDDKIHARSIGPYSLVTQQPLGGKAQFGGQRLGEMEVWAMEAYGAAYALQEFLTVKSDDVAGRTRMYEAIVKGKHTLEPGLPESFNVLIKELQSLGLDVELLENEED.

Belongs to the RNA polymerase beta chain family. The RNAP catalytic core consists of 2 alpha, 1 beta, 1 beta' and 1 omega subunit. When a sigma factor is associated with the core the holoenzyme is formed, which can initiate transcription.

The catalysed reaction is RNA(n) + a ribonucleoside 5'-triphosphate = RNA(n+1) + diphosphate. Its function is as follows. DNA-dependent RNA polymerase catalyzes the transcription of DNA into RNA using the four ribonucleoside triphosphates as substrates. This is DNA-directed RNA polymerase subunit beta from Geotalea daltonii (strain DSM 22248 / JCM 15807 / FRC-32) (Geobacter daltonii).